Reading from the N-terminus, the 159-residue chain is LOB domain-containing protein 25 (159 aa).

The region spanning 38-139 (SPCAACKFLR…RELEETNADL (102 aa)) is the LOB domain.

This sequence belongs to the LOB domain-containing protein family. In terms of tissue distribution, expressed in young shoots, roots, stems, leaves and flowers.

In Arabidopsis thaliana (Mouse-ear cress), this protein is LOB domain-containing protein 25 (LBD25).